The following is a 143-amino-acid chain: ATP synthase subunit b' (143 aa).

A helical transmembrane segment spans residues 6–26; it reads ATLPLMALQFLVLAVVLNAVF.

This sequence belongs to the ATPase B chain family. In terms of assembly, F-type ATPases have 2 components, F(1) - the catalytic core - and F(0) - the membrane proton channel. F(1) has five subunits: alpha(3), beta(3), gamma(1), delta(1), epsilon(1). F(0) has four main subunits: a(1), b(1), b'(1) and c(10-14). The alpha and beta chains form an alternating ring which encloses part of the gamma chain. F(1) is attached to F(0) by a central stalk formed by the gamma and epsilon chains, while a peripheral stalk is formed by the delta, b and b' chains.

It is found in the cellular thylakoid membrane. Functionally, f(1)F(0) ATP synthase produces ATP from ADP in the presence of a proton or sodium gradient. F-type ATPases consist of two structural domains, F(1) containing the extramembraneous catalytic core and F(0) containing the membrane proton channel, linked together by a central stalk and a peripheral stalk. During catalysis, ATP synthesis in the catalytic domain of F(1) is coupled via a rotary mechanism of the central stalk subunits to proton translocation. In terms of biological role, component of the F(0) channel, it forms part of the peripheral stalk, linking F(1) to F(0). The b'-subunit is a diverged and duplicated form of b found in plants and photosynthetic bacteria. The protein is ATP synthase subunit b' of Gloeothece citriformis (strain PCC 7424) (Cyanothece sp. (strain PCC 7424)).